The chain runs to 501 residues: ATP synthase subunit alpha (501 aa).

169–176 (GDRQTGKT) is a binding site for ATP.

This sequence belongs to the ATPase alpha/beta chains family. In terms of assembly, F-type ATPases have 2 components, CF(1) - the catalytic core - and CF(0) - the membrane proton channel. CF(1) has five subunits: alpha(3), beta(3), gamma(1), delta(1), epsilon(1). CF(0) has three main subunits: a(1), b(2) and c(9-12). The alpha and beta chains form an alternating ring which encloses part of the gamma chain. CF(1) is attached to CF(0) by a central stalk formed by the gamma and epsilon chains, while a peripheral stalk is formed by the delta and b chains.

It localises to the cell membrane. It catalyses the reaction ATP + H2O + 4 H(+)(in) = ADP + phosphate + 5 H(+)(out). In terms of biological role, produces ATP from ADP in the presence of a proton gradient across the membrane. The alpha chain is a regulatory subunit. This is ATP synthase subunit alpha from Streptococcus mutans serotype c (strain ATCC 700610 / UA159).